The primary structure comprises 471 residues: Delta(24(24(1)))-sterol reductase erg4A (471 aa).

Asparagine 15 carries N-linked (GlcNAc...) asparagine glycosylation. 8 helical membrane passes run 33–53, 89–109, 130–150, 159–179, 216–236, 244–264, 282–302, and 313–333; these read VTLI…GAVL, WTIY…LPGV, AVSS…TGVL, FGPL…VAYI, MFFE…GTAL, LVAG…NACA, GFML…HCTL, and HWNP…YWVW. NADP(+)-binding positions include lysine 340, arginine 344, leucine 380, and 392–393; that span reads HY. A helical membrane pass occupies residues 397-417; that stretch reads VFFAISWGLITGFNSPFPWFY. Residues aspartate 432, 436 to 440, and tyrosine 447 contribute to the NADP(+) site; that span reads CRERY.

This sequence belongs to the ERG4/ERG24 family.

The protein localises to the endoplasmic reticulum membrane. The enzyme catalyses ergosterol + NADP(+) = ergosta-5,7,22,24(28)-tetraen-3beta-ol + NADPH + H(+). Its pathway is steroid metabolism; ergosterol biosynthesis. Delta(24(24(1)))-sterol reductase; part of the third module of ergosterol biosynthesis pathway that includes the late steps of the pathway. Catalyzes the last step of ergosterol biosynthesis by converting ergosta-5,7,22,24(28)-tetraen-3beta-ol into ergosterol. The third module or late pathway involves the ergosterol synthesis itself through consecutive reactions that mainly occur in the endoplasmic reticulum (ER) membrane. Firstly, the squalene synthase erg9 catalyzes the condensation of 2 farnesyl pyrophosphate moieties to form squalene, which is the precursor of all steroids. Squalene synthase is crucial for balancing the incorporation of farnesyl diphosphate (FPP) into sterol and nonsterol isoprene synthesis. Secondly, squalene is converted into lanosterol by the consecutive action of the squalene epoxidase erg1 and the lanosterol synthase erg7. Then, the delta(24)-sterol C-methyltransferase erg6 methylates lanosterol at C-24 to produce eburicol. Eburicol is the substrate of the sterol 14-alpha demethylase encoded by cyp51A and cyp51B, to yield 4,4,24-trimethyl ergosta-8,14,24(28)-trienol. The C-14 reductase erg24 then reduces the C14=C15 double bond which leads to 4,4-dimethylfecosterol. A sequence of further demethylations at C-4, involving the C-4 demethylation complex containing the C-4 methylsterol oxidases erg25A or erg25B, the sterol-4-alpha-carboxylate 3-dehydrogenase erg26 and the 3-keto-steroid reductase erg27, leads to the production of fecosterol via 4-methylfecosterol. The C-8 sterol isomerase erg2 then catalyzes the reaction which results in unsaturation at C-7 in the B ring of sterols and thus converts fecosterol to episterol. The sterol-C5-desaturase erg3B then catalyzes the introduction of a C-5 double bond in the B ring to produce 5-dehydroepisterol. The 2 other sterol-C5-desaturases, erg3A and erg3C, seem to be less important in ergosterol biosynthesis. The C-22 sterol desaturase erg5 further converts 5-dehydroepisterol into ergosta-5,7,22,24(28)-tetraen-3beta-ol by forming the C-22(23) double bond in the sterol side chain. Finally, ergosta-5,7,22,24(28)-tetraen-3beta-ol is substrate of the C-24(28) sterol reductases erg4A and erg4B to produce ergosterol. Possible alternative sterol biosynthetic pathways might exist from fecosterol to ergosterol, depending on the activities of the erg3 isoforms. The polypeptide is Delta(24(24(1)))-sterol reductase erg4A (Aspergillus fumigatus (strain ATCC MYA-4609 / CBS 101355 / FGSC A1100 / Af293) (Neosartorya fumigata)).